A 113-amino-acid polypeptide reads, in one-letter code: Nitrogenase-stabilizing/protective protein NifW (113 aa).

Belongs to the NifW family. As to quaternary structure, homotrimer; associates with NifD.

Its function is as follows. May protect the nitrogenase Fe-Mo protein from oxidative damage. In Dechloromonas aromatica (strain RCB), this protein is Nitrogenase-stabilizing/protective protein NifW.